Here is a 1079-residue protein sequence, read N- to C-terminus: MTENKTKVKDLAAELGVTTKELGQVLKDMNISAKTSTSVIAQEDLPRIKERVQAQRDGGARKEGNPDVIVRRRHRDGDRASARAEAKAPEQEATAAMPETSAPERAEEADKPAVAKPAKAPETEAHARARKEPQAEPVKARIIRRPDEPAPVAKVVEAAPAETPAPEAPAVKATVTAEAAPAKTVEPESERPQADKPATARVVRPATPDASAVPDGTSSAPTLPVRSAEPSDTVERADADADGDDDDAQQRRRKKKRRQPEAVVPQVRVISRPDPAAVAQQQMQQQAAQQQREAGGYRPGGQRPEGGYRPEGQREGGYRPEGQREGGYRPGGAPRPEGGYRPGGPRPEGGYRPGAPRPEGGYRPAGGPRPEGQREGGYRPGAPRPEGGYRPAGGAPRPEGQREGGYRPAGGPPRPGGAPRPGGFGGAPGGMPVPGADGRGDQSKKKRQKGRRTVDFQADGPRGRSDDDVMRGPRGRGKRGKKDVRPAATQPLKAIKRKIKVDEAIRVADMAHQMGLKANEIIKVLFGLGVMATINQSLDIDTATVVAGEFGYEVEKVGFSEDDYLVPKEEDAPETLVTRPPVVTIMGHVDHGKTSLLDAIRKSNVTAGEAGGITQHIGAYHVTTKKGEIVFLDTPGHEAFTAMRARGAQITDLVVLVVAADDGVMEQTREAVNHSKAAGVPIMVAVNKMDKEGANPDRVIRELSELGLVAEDWGGDTIFAKVSAKTREGLDELLELIAIQAEILELKANPDKAARGHVVEAKLDKGRGPLATVLVQEGTLRQGDAFVCGVFAGRVRAMFDDQGRKVKEAGPSTPVEVQGFDGVVEAGEEFVSVADDKVARRIAESRAVKQRERELAKESKVTLETFLSRRADAAEALTLNLVLKADVQGTLEAISEAVRKLSTEKVKINIIHGGAGAITESDILLASASDAIIIGFNVRPTSKVKDIAEQENVDIRFYDIIYKLVDEIKSAMAGMLAPVQREVYLGQAEVRETFSVPKIGVIAGCHVADGKVTRNAGVRLLRDGVVVYTGKITSLKRFKDDVRDVQKGYECGMGLENFNDIKVGDVIEAFEMVEEAATL.

Basic and acidic residues-rich tracts occupy residues 52–65, 75–90, and 102–134; these read VQAQ…KEGN, RDGD…KAPE, and APER…KEPQ. The disordered stretch occupies residues 52–488; that stretch reads VQAQRDGGAR…RGKKDVRPAA (437 aa). The span at 150 to 184 shows a compositional bias: low complexity; that stretch reads APVAKVVEAAPAETPAPEAPAVKATVTAEAAPAKT. Over residues 185-194 the composition is skewed to basic and acidic residues; sequence VEPESERPQA. The span at 276-291 shows a compositional bias: low complexity; it reads AAVAQQQMQQQAAQQQ. The span at 306–327 shows a compositional bias: basic and acidic residues; sequence GGYRPEGQREGGYRPEGQREGG. Composition is skewed to low complexity over residues 348 to 370 and 380 to 398; these read EGGY…GPRP and PGAP…APRP. Over residues 419–429 the composition is skewed to gly residues; sequence PRPGGFGGAPG. A compositionally biased stretch (basic and acidic residues) spans 461–471; the sequence is PRGRSDDDVMR. Residues 473–482 show a composition bias toward basic residues; sequence PRGRGKRGKK. A tr-type G domain is found at 578-745; it reads TRPPVVTIMG…LIAIQAEILE (168 aa). Positions 587–594 are G1; that stretch reads GHVDHGKT. Position 587–594 (587–594) interacts with GTP; it reads GHVDHGKT. Residues 612-616 are G2; the sequence is GITQH. The interval 633 to 636 is G3; it reads DTPG. GTP-binding positions include 633-637 and 687-690; these read DTPGH and NKMD. The segment at 687–690 is G4; it reads NKMD. The G5 stretch occupies residues 723–725; sequence SAK.

It belongs to the TRAFAC class translation factor GTPase superfamily. Classic translation factor GTPase family. IF-2 subfamily.

Its subcellular location is the cytoplasm. One of the essential components for the initiation of protein synthesis. Protects formylmethionyl-tRNA from spontaneous hydrolysis and promotes its binding to the 30S ribosomal subunits. Also involved in the hydrolysis of GTP during the formation of the 70S ribosomal complex. The protein is Translation initiation factor IF-2 of Nitratidesulfovibrio vulgaris (strain DP4) (Desulfovibrio vulgaris).